The following is a 582-amino-acid chain: Aspartate--tRNA ligase (582 aa).

Glutamate 174 serves as a coordination point for L-aspartate. Residues 198-201 are aspartate; that stretch reads QITK. Arginine 220 contacts L-aspartate. Residues 220–222 and glutamine 229 each bind ATP; that span reads RDE. An L-aspartate-binding site is contributed by histidine 443. Glutamate 477 serves as a coordination point for ATP. Arginine 484 contributes to the L-aspartate binding site. 529–532 contacts ATP; it reads GLDR.

The protein belongs to the class-II aminoacyl-tRNA synthetase family. Type 1 subfamily. As to quaternary structure, homodimer.

It is found in the cytoplasm. The enzyme catalyses tRNA(Asp) + L-aspartate + ATP = L-aspartyl-tRNA(Asp) + AMP + diphosphate. Functionally, catalyzes the attachment of L-aspartate to tRNA(Asp) in a two-step reaction: L-aspartate is first activated by ATP to form Asp-AMP and then transferred to the acceptor end of tRNA(Asp). This Streptococcus pyogenes serotype M18 (strain MGAS8232) protein is Aspartate--tRNA ligase.